Here is a 362-residue protein sequence, read N- to C-terminus: MVRKALENLKPYVPGKPVEEVERELGITNIDKLASNENLWGISPKVAAAIKEAVDKVNYYPDGGAFRLKEKIAAKYGVTPDNIILGNGSDELVMFLAMALIDPGDEAIMPVPSFPRYEPVVTMMNGIAREIPLKEHRLDLKTMAEAVNEKTRLVYLCNPNNPTGTYITKGELEEFLERVPEEVVVVLDEAYFEFARLFNDYPDGLNFFKKRPNTVVLRTFSKAYGLAGLRVGYGFAPENLAKAINSLRPPFNVNFLAQMAAVAALDDEEYVREVVKNTDEGKKFLYQEIIRMGLSYIPSAANFLMIKTEKPSALVFRELLKRGVIVRSGDIFGMDDWIRVTVGTPVQNARFINELKMVLEIL.

Lys222 carries the N6-(pyridoxal phosphate)lysine modification.

The protein belongs to the class-II pyridoxal-phosphate-dependent aminotransferase family. Histidinol-phosphate aminotransferase subfamily. As to quaternary structure, homodimer. Pyridoxal 5'-phosphate is required as a cofactor.

It catalyses the reaction L-histidinol phosphate + 2-oxoglutarate = 3-(imidazol-4-yl)-2-oxopropyl phosphate + L-glutamate. It functions in the pathway amino-acid biosynthesis; L-histidine biosynthesis; L-histidine from 5-phospho-alpha-D-ribose 1-diphosphate: step 7/9. The sequence is that of Histidinol-phosphate aminotransferase 2 from Carboxydothermus hydrogenoformans (strain ATCC BAA-161 / DSM 6008 / Z-2901).